The primary structure comprises 226 residues: Large ribosomal subunit protein mL67 (226 aa).

This sequence belongs to the mitochondrion-specific ribosomal protein mL67 family. As to quaternary structure, component of the mitochondrial large ribosomal subunit (mt-LSU). Mature yeast 74S mitochondrial ribosomes consist of a small (37S) and a large (54S) subunit. The 37S small subunit contains a 15S ribosomal RNA (15S mt-rRNA) and 34 different proteins. The 54S large subunit contains a 21S rRNA (21S mt-rRNA) and 46 different proteins.

The protein localises to the nucleus. It is found in the mitochondrion. In terms of biological role, component of the mitochondrial ribosome (mitoribosome), a dedicated translation machinery responsible for the synthesis of mitochondrial genome-encoded proteins, including at least some of the essential transmembrane subunits of the mitochondrial respiratory chain. The mitoribosomes are attached to the mitochondrial inner membrane and translation products are cotranslationally integrated into the membrane. mL67/MHR1 also has extraribosomal functions, being involved in regulation of mitochondrial DNA recombination, maintenance and repair, and generation of homoplasmic cells. mL67/MHR1 also acts as transcription factor involved in regulation of RNA polymerase II-dependent transcription. The sequence is that of Large ribosomal subunit protein mL67 (MHR1) from Saccharomyces cerevisiae (strain ATCC 204508 / S288c) (Baker's yeast).